The primary structure comprises 499 residues: Aspartyl/glutamyl-tRNA(Asn/Gln) amidotransferase subunit B (499 aa).

The protein belongs to the GatB/GatE family. GatB subfamily. Heterotrimer of A, B and C subunits.

It carries out the reaction L-glutamyl-tRNA(Gln) + L-glutamine + ATP + H2O = L-glutaminyl-tRNA(Gln) + L-glutamate + ADP + phosphate + H(+). The catalysed reaction is L-aspartyl-tRNA(Asn) + L-glutamine + ATP + H2O = L-asparaginyl-tRNA(Asn) + L-glutamate + ADP + phosphate + 2 H(+). Allows the formation of correctly charged Asn-tRNA(Asn) or Gln-tRNA(Gln) through the transamidation of misacylated Asp-tRNA(Asn) or Glu-tRNA(Gln) in organisms which lack either or both of asparaginyl-tRNA or glutaminyl-tRNA synthetases. The reaction takes place in the presence of glutamine and ATP through an activated phospho-Asp-tRNA(Asn) or phospho-Glu-tRNA(Gln). This Bartonella quintana (strain Toulouse) (Rochalimaea quintana) protein is Aspartyl/glutamyl-tRNA(Asn/Gln) amidotransferase subunit B.